We begin with the raw amino-acid sequence, 416 residues long: MKYNLLPLILLSLLVAPLLAMGSAPAITVTTQPVYHPGQTVFISGVTSPNTLVGITIYNPQGKAVYSNTTTSGPNGDYSLKAFTFPLQESTTFPFGTYTVQVGTQTGFTNSTTFQFLPLTATVNVLVVNPQGVPIQGATVTADSVTATTNASGQAVLNLPTGTYTLKVVPPSPYSPASENITVTAPNTYSFKITVQIQELALQVVSATSPNVNLKDLTSGTSITMIGGTTLTLMSMVTFAGQPISTATVTAMYNGTMYNATYMNGYYVITISVPNTQYETDLVIQATYSGMQSNTVTLPLTVNVNEQAIIASLNSTIQSLESQISSLSSTVSTLSSSVTSLSNTVSSLSSTVSKLNGTVASLQSSVSTLSSEYSTLNSRVNALSGLSGTVDIALAVSIIAIIISIVVLILVFRKIS.

Positions 1–20 are cleaved as a signal peptide; sequence MKYNLLPLILLSLLVAPLLA. A coiled-coil region spans residues 310 to 330; that stretch reads IASLNSTIQSLESQISSLSST. The helical transmembrane segment at 392-412 threads the bilayer; the sequence is IALAVSIIAIIISIVVLILVF.

It belongs to the Sulfolobales SlaB family. As to quaternary structure, the mushroom-shaped unit cells of the Sulfolobales' S-layers may consist of three SlaB subunits and six SlaA subunits.

The protein resides in the secreted. It is found in the cell wall. Its subcellular location is the S-layer. The protein localises to the cell membrane. Functionally, S-layer small protein. May anchor the complex to the cell membrane. The protein is S-layer protein B of Metallosphaera sedula (strain ATCC 51363 / DSM 5348 / JCM 9185 / NBRC 15509 / TH2).